Here is a 407-residue protein sequence, read N- to C-terminus: Betaine--homocysteine S-methyltransferase 1 (407 aa).

The 304-residue stretch at 11 to 314 (KGILERLNSG…YHIRAIAEEL (304 aa)) folds into the Hcy-binding domain. Residues lysine 40, lysine 93, and lysine 98 each carry the N6-succinyllysine modification. A Zn(2+)-binding site is contributed by cysteine 217. N6-succinyllysine is present on residues lysine 232 and lysine 241. The Zn(2+) site is built by cysteine 299 and cysteine 300. At serine 330 the chain carries Phosphoserine. An N6-succinyllysine mark is found at lysine 340 and lysine 377.

Homotetramer. The cofactor is Zn(2+).

The protein localises to the cytoplasm. The protein resides in the cytosol. It localises to the nucleus. It catalyses the reaction L-homocysteine + glycine betaine = N,N-dimethylglycine + L-methionine. It participates in amine and polyamine degradation; betaine degradation; sarcosine from betaine: step 1/2. It functions in the pathway amino-acid biosynthesis; L-methionine biosynthesis via de novo pathway; L-methionine from L-homocysteine (BhmT route): step 1/1. In terms of biological role, involved in the regulation of homocysteine metabolism. Converts betaine and homocysteine to dimethylglycine and methionine, respectively. This reaction is also required for the irreversible oxidation of choline. The polypeptide is Betaine--homocysteine S-methyltransferase 1 (BHMT) (Bos taurus (Bovine)).